A 537-amino-acid chain; its full sequence is CTP synthase (537 aa).

The interval 1–267 is amidoligase domain; that stretch reads MAKYIFVTGG…DEYVIKRLNL (267 aa). Ser13 contacts CTP. Position 13 (Ser13) interacts with UTP. 14–19 lines the ATP pocket; that stretch reads SLGKGI. Tyr54 serves as a coordination point for L-glutamine. Asp71 is a binding site for ATP. Residues Asp71 and Glu141 each contribute to the Mg(2+) site. Residues 148–150, 188–193, and Lys224 each bind CTP; these read DIE and KTKPTQ. UTP is bound by residues 188-193 and Lys224; that span reads KTKPTQ. 240–242 contributes to the ATP binding site; it reads RDV. In terms of domain architecture, Glutamine amidotransferase type-1 spans 292–534; that stretch reads EVALVGKYVD…VKAMLNLKIN (243 aa). Gly354 contacts L-glutamine. Catalysis depends on Cys381, which acts as the Nucleophile; for glutamine hydrolysis. L-glutamine-binding positions include 382-385, Glu405, and Arg462; that span reads LGMQ. Active-site residues include His507 and Glu509.

The protein belongs to the CTP synthase family. In terms of assembly, homotetramer.

It catalyses the reaction UTP + L-glutamine + ATP + H2O = CTP + L-glutamate + ADP + phosphate + 2 H(+). The enzyme catalyses L-glutamine + H2O = L-glutamate + NH4(+). It carries out the reaction UTP + NH4(+) + ATP = CTP + ADP + phosphate + 2 H(+). It participates in pyrimidine metabolism; CTP biosynthesis via de novo pathway; CTP from UDP: step 2/2. Its activity is regulated as follows. Allosterically activated by GTP, when glutamine is the substrate; GTP has no effect on the reaction when ammonia is the substrate. The allosteric effector GTP functions by stabilizing the protein conformation that binds the tetrahedral intermediate(s) formed during glutamine hydrolysis. Inhibited by the product CTP, via allosteric rather than competitive inhibition. Functionally, catalyzes the ATP-dependent amination of UTP to CTP with either L-glutamine or ammonia as the source of nitrogen. Regulates intracellular CTP levels through interactions with the four ribonucleotide triphosphates. This is CTP synthase from Caldanaerobacter subterraneus subsp. tengcongensis (strain DSM 15242 / JCM 11007 / NBRC 100824 / MB4) (Thermoanaerobacter tengcongensis).